A 195-amino-acid chain; its full sequence is uncharacterized protein (195 aa).

This is an uncharacterized protein from Magallana gigas (Pacific oyster).